The following is a 319-amino-acid chain: Lipase 1 (319 aa).

The active-site Nucleophile is Ser189. Residues Asp314 and Asp317 each contribute to the Ca(2+) site.

It catalyses the reaction a triacylglycerol + H2O = a diacylglycerol + a fatty acid + H(+). The sequence is that of Lipase 1 (lip1) from Moraxella sp. (strain TA144).